A 190-amino-acid chain; its full sequence is NADH-quinone oxidoreductase subunit B (190 aa).

Cys39, Cys40, Cys104, and Cys135 together coordinate [4Fe-4S] cluster.

Belongs to the complex I 20 kDa subunit family. In terms of assembly, NDH-1 is composed of 14 different subunits. Subunits NuoB, C, D, E, F, and G constitute the peripheral sector of the complex. [4Fe-4S] cluster is required as a cofactor.

Its subcellular location is the cell inner membrane. The enzyme catalyses a quinone + NADH + 5 H(+)(in) = a quinol + NAD(+) + 4 H(+)(out). In terms of biological role, NDH-1 shuttles electrons from NADH, via FMN and iron-sulfur (Fe-S) centers, to quinones in the respiratory chain. The immediate electron acceptor for the enzyme in this species is believed to be a menaquinone. Couples the redox reaction to proton translocation (for every two electrons transferred, four hydrogen ions are translocated across the cytoplasmic membrane), and thus conserves the redox energy in a proton gradient. This is NADH-quinone oxidoreductase subunit B from Chlorobium chlorochromatii (strain CaD3).